The chain runs to 239 residues: Tryptophan synthase alpha chain (239 aa).

Catalysis depends on proton acceptor residues E34 and D45.

Belongs to the TrpA family. As to quaternary structure, tetramer of two alpha and two beta chains.

It carries out the reaction (1S,2R)-1-C-(indol-3-yl)glycerol 3-phosphate + L-serine = D-glyceraldehyde 3-phosphate + L-tryptophan + H2O. The protein operates within amino-acid biosynthesis; L-tryptophan biosynthesis; L-tryptophan from chorismate: step 5/5. Functionally, the alpha subunit is responsible for the aldol cleavage of indoleglycerol phosphate to indole and glyceraldehyde 3-phosphate. This is Tryptophan synthase alpha chain from Thermotoga petrophila (strain ATCC BAA-488 / DSM 13995 / JCM 10881 / RKU-1).